The sequence spans 152 residues: MALSTLEQKLTEMITAPVEALGFELVGIEFIRGRQSTLRIYINSDEGITVDDCADVSHQVSAVLDVEDPISVAYSLEVSSPGLDRPLFTAAHYRQFIGSDVSVVLRIAVQNRRKWQGIIKAVDGEMITVTVDGKDEVFALQNIQKANLVPHF.

Belongs to the RimP family.

The protein localises to the cytoplasm. Required for maturation of 30S ribosomal subunits. The chain is Ribosome maturation factor RimP from Sodalis glossinidius (strain morsitans).